A 172-amino-acid chain; its full sequence is Adenine phosphoribosyltransferase (172 aa).

This sequence belongs to the purine/pyrimidine phosphoribosyltransferase family. Homodimer.

Its subcellular location is the cytoplasm. The enzyme catalyses AMP + diphosphate = 5-phospho-alpha-D-ribose 1-diphosphate + adenine. The protein operates within purine metabolism; AMP biosynthesis via salvage pathway; AMP from adenine: step 1/1. Functionally, catalyzes a salvage reaction resulting in the formation of AMP, that is energically less costly than de novo synthesis. The sequence is that of Adenine phosphoribosyltransferase from Prochlorococcus marinus (strain NATL2A).